The following is a 95-amino-acid chain: MKYQAKYIRMSPTKVRRVVRLLDGMTYEKASQVVRFLPYRAATCVAKLLKSVNAQATQRVHFYVDQAPTLKRIRARAQSRAYPIKKRCCHITLEI.

The protein belongs to the universal ribosomal protein uL22 family. In terms of assembly, part of the 50S ribosomal subunit.

The protein resides in the plastid. The protein localises to the chloroplast. Its function is as follows. This protein binds specifically to 23S rRNA. Functionally, the globular domain of the protein is located near the polypeptide exit tunnel on the outside of the subunit, while an extended beta-hairpin is found that lines the wall of the exit tunnel in the center of the 70S ribosome. The polypeptide is Large ribosomal subunit protein uL22c (rpl22) (Cyanidioschyzon merolae (strain NIES-3377 / 10D) (Unicellular red alga)).